The sequence spans 143 residues: Large ribosomal subunit protein uL11 (143 aa).

This sequence belongs to the universal ribosomal protein uL11 family. As to quaternary structure, part of the ribosomal stalk of the 50S ribosomal subunit. Interacts with L10 and the large rRNA to form the base of the stalk. L10 forms an elongated spine to which L12 dimers bind in a sequential fashion forming a multimeric L10(L12)X complex. In terms of processing, one or more lysine residues are methylated.

In terms of biological role, forms part of the ribosomal stalk which helps the ribosome interact with GTP-bound translation factors. The sequence is that of Large ribosomal subunit protein uL11 from Rhizobium johnstonii (strain DSM 114642 / LMG 32736 / 3841) (Rhizobium leguminosarum bv. viciae).